A 298-amino-acid chain; its full sequence is Cyclin-C (298 aa).

In terms of domain architecture, Cyclin N-terminal spans 46 to 162 (NFITAVATEC…ILDCCLVVHH (117 aa)). Residues 278-298 (KLPKPNTPIPPPQQQQSSYHM) form a disordered region.

It belongs to the cyclin family. Cyclin C subfamily. Component of the Mediator complex.

Its subcellular location is the nucleus. Functionally, component of the Mediator complex, a coactivator involved in regulated gene transcription of nearly all RNA polymerase II-dependent genes. Mediator functions as a bridge to convey information from gene-specific regulatory proteins to the basal RNA polymerase II transcription machinery. Mediator is recruited to promoters by direct interactions with regulatory proteins and serves as a scaffold for the assembly of a functional preinitiation complex with RNA polymerase II and the general transcription factors. Binds to and activates cyclin-dependent kinase cdk-8 that phosphorylates the CTD (C-terminal domain) of the large subunit of RNA polymerase II (RNAp II), which may inhibit the formation of a transcription initiation complex. The protein is Cyclin-C (cic-1) of Caenorhabditis briggsae.